Consider the following 173-residue polypeptide: Shikimate kinase 1 (173 aa).

14 to 19 contributes to the ATP binding site; it reads GAGKST. Ser18 contacts Mg(2+). Substrate-binding residues include Asp36, Arg60, and Gly82. Arg120 is an ATP binding site. Arg140 is a substrate binding site. Residue Gln157 coordinates ATP.

The protein belongs to the shikimate kinase family. As to quaternary structure, monomer. Mg(2+) serves as cofactor.

The protein resides in the cytoplasm. It carries out the reaction shikimate + ATP = 3-phosphoshikimate + ADP + H(+). The protein operates within metabolic intermediate biosynthesis; chorismate biosynthesis; chorismate from D-erythrose 4-phosphate and phosphoenolpyruvate: step 5/7. Its function is as follows. Catalyzes the specific phosphorylation of the 3-hydroxyl group of shikimic acid using ATP as a cosubstrate. The protein is Shikimate kinase 1 of Escherichia fergusonii (strain ATCC 35469 / DSM 13698 / CCUG 18766 / IAM 14443 / JCM 21226 / LMG 7866 / NBRC 102419 / NCTC 12128 / CDC 0568-73).